The sequence spans 609 residues: Glutamine--fructose-6-phosphate aminotransferase [isomerizing] (609 aa).

The active-site Nucleophile; for GATase activity is the Cys2. In terms of domain architecture, Glutamine amidotransferase type-2 spans 2-219; that stretch reads CGIFGYIGAK…SGELAVVGLG (218 aa). SIS domains follow at residues 280–426 and 458–599; these read ISEK…LKQT and WAND…IDRP. Lys604 acts as the For Fru-6P isomerization activity in catalysis.

In terms of assembly, homodimer.

The protein localises to the cytoplasm. The catalysed reaction is D-fructose 6-phosphate + L-glutamine = D-glucosamine 6-phosphate + L-glutamate. Catalyzes the first step in hexosamine metabolism, converting fructose-6P into glucosamine-6P using glutamine as a nitrogen source. In Chlamydia caviae (strain ATCC VR-813 / DSM 19441 / 03DC25 / GPIC) (Chlamydophila caviae), this protein is Glutamine--fructose-6-phosphate aminotransferase [isomerizing].